Consider the following 371-residue polypeptide: DNA replication and repair protein RecF (371 aa).

Position 30–37 (30–37 (GENAQGKT)) interacts with ATP.

Belongs to the RecF family.

The protein resides in the cytoplasm. Its function is as follows. The RecF protein is involved in DNA metabolism; it is required for DNA replication and normal SOS inducibility. RecF binds preferentially to single-stranded, linear DNA. It also seems to bind ATP. This is DNA replication and repair protein RecF from Staphylococcus haemolyticus (strain JCSC1435).